The chain runs to 440 residues: COP9 signalosome complex subunit 4 (440 aa).

Residues Ser216 to Glu386 form the PCI domain.

The protein belongs to the CSN4 family. In terms of assembly, component of the COP9 signalosome (CSN) complex.

It localises to the cytoplasm. The protein resides in the nucleus. Its function is as follows. Component of the COP9 signalosome (CSN) complex that acts as an regulator of the ubiquitin (Ubl) conjugation pathway by mediating the deneddylation of the cullin subunit of SCF-type E3 ubiquitin-protein ligase complexes. The CSN complex is involved in the regulation of the circadian clock through its control of the stability of the SCF(FWD1) complex. The protein is COP9 signalosome complex subunit 4 (csn-4) of Neurospora crassa (strain ATCC 24698 / 74-OR23-1A / CBS 708.71 / DSM 1257 / FGSC 987).